The following is a 421-amino-acid chain: 3-isopropylmalate dehydratase large subunit (421 aa).

3 residues coordinate [4Fe-4S] cluster: cysteine 302, cysteine 362, and cysteine 365.

It belongs to the aconitase/IPM isomerase family. LeuC type 2 subfamily. As to quaternary structure, heterodimer of LeuC and LeuD. Requires [4Fe-4S] cluster as cofactor.

The catalysed reaction is (2R,3S)-3-isopropylmalate = (2S)-2-isopropylmalate. The protein operates within amino-acid biosynthesis; L-leucine biosynthesis; L-leucine from 3-methyl-2-oxobutanoate: step 2/4. In terms of biological role, catalyzes the isomerization between 2-isopropylmalate and 3-isopropylmalate, via the formation of 2-isopropylmaleate. This Campylobacter fetus subsp. fetus (strain 82-40) protein is 3-isopropylmalate dehydratase large subunit.